Here is a 178-residue protein sequence, read N- to C-terminus: MVSRVAKNPIKIPTGVEVNVAGQQITVKGKLGTLTRVIHRAVKVTKTDAELQTICANDSPGSNALAGTARAVLANMVQGVHTGFQRKLVMVGVGYRAKAEDKKLNLTVGLSHPVNIEMPEGITVETPSQTEIIVKGADKQRVSQVAANIREIRPPEPYKGKGIRYDNERVILKEAKKK.

This sequence belongs to the universal ribosomal protein uL6 family. As to quaternary structure, part of the 50S ribosomal subunit.

In terms of biological role, this protein binds to the 23S rRNA, and is important in its secondary structure. It is located near the subunit interface in the base of the L7/L12 stalk, and near the tRNA binding site of the peptidyltransferase center. This Coxiella burnetii (strain CbuG_Q212) (Coxiella burnetii (strain Q212)) protein is Large ribosomal subunit protein uL6.